The sequence spans 136 residues: UPF0310 protein SMU_442 (136 aa).

This sequence belongs to the UPF0310 family.

The protein is UPF0310 protein SMU_442 of Streptococcus mutans serotype c (strain ATCC 700610 / UA159).